A 206-amino-acid polypeptide reads, in one-letter code: Orotate phosphoribosyltransferase (206 aa).

Residues R93, K97, H99, and 119–127 each bind 5-phospho-alpha-D-ribose 1-diphosphate; that span reads EDLISTGGT. An orotate-binding site is contributed by S123.

Belongs to the purine/pyrimidine phosphoribosyltransferase family. PyrE subfamily. Homodimer. Mg(2+) is required as a cofactor.

It catalyses the reaction orotidine 5'-phosphate + diphosphate = orotate + 5-phospho-alpha-D-ribose 1-diphosphate. It participates in pyrimidine metabolism; UMP biosynthesis via de novo pathway; UMP from orotate: step 1/2. Catalyzes the transfer of a ribosyl phosphate group from 5-phosphoribose 1-diphosphate to orotate, leading to the formation of orotidine monophosphate (OMP). The chain is Orotate phosphoribosyltransferase from Bacillus caldolyticus.